Reading from the N-terminus, the 767-residue chain is Cation/H(+) antiporter 27 (767 aa).

11 helical membrane passes run 39-59 (LPLL…FQFL), 63-83 (FGKF…PSVI), 99-119 (VYII…ITTC), 135-155 (INGI…AILI), 173-193 (HVAI…LSSL), 205-225 (LASM…NIAI), 242-262 (VLQM…MLWM), 280-300 (ICVL…PYFF), 323-343 (IGCF…GLNI), 371-391 (IALP…VGFI), and 415-435 (KSFG…IVIV).

The protein belongs to the monovalent cation:proton antiporter 2 (CPA2) transporter (TC 2.A.37) family. CHX (TC 2.A.37.4) subfamily. In terms of tissue distribution, specifically expressed in pollen.

It localises to the membrane. Its function is as follows. May operate as a cation/H(+) antiporter. In Arabidopsis thaliana (Mouse-ear cress), this protein is Cation/H(+) antiporter 27 (CHX27).